The following is a 336-amino-acid chain: Serpentine receptor class gamma-13 (336 aa).

The next 8 helical transmembrane spans lie at 32 to 52 (LKYIIQVTLLSINFILNFLII), 68 to 88 (FFIIYAADLIMGMYMSLSEIL), 93 to 113 (FIYVTLLCPILAPYFFTPSIF), 133 to 153 (VFLSFNRMTCVVFPVGYSAIW), 156 to 176 (ILTPIIIVLFVLPIGIIWNVL), 210 to 230 (FIVSLILIIVISGVTLYALLI), 246 to 266 (TMVLSLEFSFLSVIQIYFAFF), and 277 to 297 (LLRVMYFTYDLLNFSTTIIFI).

Belongs to the nematode receptor-like protein srg family.

The protein localises to the membrane. The chain is Serpentine receptor class gamma-13 (srg-13) from Caenorhabditis elegans.